The chain runs to 338 residues: Large ribosomal subunit protein uL10 (338 aa).

Positions 292–338 are disordered; sequence LDDDLKERVSSTASAVEAKEEEAPKEEKEEEKEEEEEAPAAGLGMLF. Residues 308 to 318 are compositionally biased toward basic and acidic residues; the sequence is EAKEEEAPKEE. Residues 319-329 show a composition bias toward acidic residues; that stretch reads KEEEKEEEEEA.

Belongs to the universal ribosomal protein uL10 family. Part of the 50S ribosomal subunit. Forms part of the ribosomal stalk which helps the ribosome interact with GTP-bound translation factors. Forms a heptameric L10(L12)2(L12)2(L12)2 complex, where L10 forms an elongated spine to which the L12 dimers bind in a sequential fashion.

In terms of biological role, forms part of the ribosomal stalk, playing a central role in the interaction of the ribosome with GTP-bound translation factors. The protein is Large ribosomal subunit protein uL10 of Methanococcus aeolicus (strain ATCC BAA-1280 / DSM 17508 / OCM 812 / Nankai-3).